The sequence spans 74 residues: ATP synthase subunit c (74 aa).

Transmembrane regions (helical) follow at residues 8-28 (FIGAGLAAIGMIGSGIGVGNI) and 52-72 (IGFAVTEAIALFALVVALMVL).

Belongs to the ATPase C chain family. F-type ATPases have 2 components, F(1) - the catalytic core - and F(0) - the membrane proton channel. F(1) has five subunits: alpha(3), beta(3), gamma(1), delta(1), epsilon(1). F(0) has three main subunits: a(1), b(2) and c(10-14). The alpha and beta chains form an alternating ring which encloses part of the gamma chain. F(1) is attached to F(0) by a central stalk formed by the gamma and epsilon chains, while a peripheral stalk is formed by the delta and b chains.

The protein localises to the cell inner membrane. In terms of biological role, f(1)F(0) ATP synthase produces ATP from ADP in the presence of a proton or sodium gradient. F-type ATPases consist of two structural domains, F(1) containing the extramembraneous catalytic core and F(0) containing the membrane proton channel, linked together by a central stalk and a peripheral stalk. During catalysis, ATP synthesis in the catalytic domain of F(1) is coupled via a rotary mechanism of the central stalk subunits to proton translocation. Functionally, key component of the F(0) channel; it plays a direct role in translocation across the membrane. A homomeric c-ring of between 10-14 subunits forms the central stalk rotor element with the F(1) delta and epsilon subunits. In Paramagnetospirillum magneticum (strain ATCC 700264 / AMB-1) (Magnetospirillum magneticum), this protein is ATP synthase subunit c.